The sequence spans 330 residues: DNA-directed RNA polymerase subunit alpha (330 aa).

An alpha N-terminal domain (alpha-NTD) region spans residues 1–232; that stretch reads MAILAFQKPD…YHFMLFSDEK (232 aa). The interval 248–330 is alpha C-terminal domain (alpha-CTD); that stretch reads EEVLHMRQLL…DISKYKLDKE (83 aa).

The protein belongs to the RNA polymerase alpha chain family. As to quaternary structure, homodimer. The RNAP catalytic core consists of 2 alpha, 1 beta, 1 beta' and 1 omega subunit. When a sigma factor is associated with the core the holoenzyme is formed, which can initiate transcription.

It carries out the reaction RNA(n) + a ribonucleoside 5'-triphosphate = RNA(n+1) + diphosphate. Functionally, DNA-dependent RNA polymerase catalyzes the transcription of DNA into RNA using the four ribonucleoside triphosphates as substrates. The polypeptide is DNA-directed RNA polymerase subunit alpha (Bacteroides fragilis (strain ATCC 25285 / DSM 2151 / CCUG 4856 / JCM 11019 / LMG 10263 / NCTC 9343 / Onslow / VPI 2553 / EN-2)).